The following is a 991-amino-acid chain: Replication protein 1a (991 aa).

The methyltransferase stretch occupies residues 52–409 (VLDVKDSEVI…TIVINGMSMQ (358 aa)). One can recognise an Alphavirus-like MT domain in the interval 72–290 (HLAQQELAPH…HDWDNIKSFM (219 aa)). Residues 686 to 837 (CVISNSHDLF…KLIPDETSDA (152 aa)) enclose the (+)RNA virus helicase ATP-binding domain. The ATP-dependent helicase stretch occupies residues 711–973 (VDGVAGCGKT…VTRHKVTFRY (263 aa)). 713-720 (GVAGCGKT) lines the ATP pocket. Residues 838–991 (DTTFRSPQDV…DLIANCIPLV (154 aa)) form the (+)RNA virus helicase C-terminal domain.

It belongs to the bromoviridae replication protein 1a family. In terms of assembly, interacts with RNA-directed RNA polymerase 2a.

The protein localises to the host endoplasmic reticulum membrane. Functionally, involved in the virus replication. Contains a helicase domain and a methyltransferase domain. The methyltransferase domain is probably involved in viral RNA capping. Involved in the formation of ER membrane spherular invaginations in which RNA replication complexes form. The sequence is that of Replication protein 1a from Cucumber mosaic virus (strain Q) (CMV).